The primary structure comprises 481 residues: UDP-N-acetylmuramoyl-L-alanyl-D-glutamate--L-lysine ligase (481 aa).

S42 lines the UDP-N-acetyl-alpha-D-muramoyl-L-alanyl-D-glutamate pocket. ATP is bound at residue 118-124 (GTKGKTT). Residues Q158, 160-161 (TT), S187, and R195 each bind UDP-N-acetyl-alpha-D-muramoyl-L-alanyl-D-glutamate. N6-carboxylysine is present on K229. An L-lysine recognition motif motif is present at residues 404–407 (DDPN).

This sequence belongs to the MurCDEF family. MurE subfamily. Carboxylation is probably crucial for Mg(2+) binding and, consequently, for the gamma-phosphate positioning of ATP.

It localises to the cytoplasm. The enzyme catalyses UDP-N-acetyl-alpha-D-muramoyl-L-alanyl-D-glutamate + L-lysine + ATP = UDP-N-acetyl-alpha-D-muramoyl-L-alanyl-gamma-D-glutamyl-L-lysine + ADP + phosphate + H(+). It participates in cell wall biogenesis; peptidoglycan biosynthesis. Catalyzes the addition of L-lysine to the nucleotide precursor UDP-N-acetylmuramoyl-L-alanyl-D-glutamate (UMAG) in the biosynthesis of bacterial cell-wall peptidoglycan. This is UDP-N-acetylmuramoyl-L-alanyl-D-glutamate--L-lysine ligase from Streptococcus pyogenes serotype M6 (strain ATCC BAA-946 / MGAS10394).